The primary structure comprises 383 residues: MKKEIVGMLLAGGEGKRLGQLTRKLAKPAVYFGGKYRIIDFPLSNCTNSGIDTVGVLTQYEPLALNGHIGIGSPWDLDRRHGGVTVLPPYIEKQGGSWYKGTADAIYQNRYYIEQYDPEYVLILSGDHIYKMDYDRMISHHKKLGADATISVIEVPWEEASRFGIMNTNEEMTITQFEEKPTTPISNLASMGIYIFNWSVLKSYLIQDAKQANSSHDFGKDIIPKMLAKDLKLVAYPFEGYWKDVGTIKSYWEANMDLLDEHSSLMLNDPSWRIYSVNRNQPPQYISTRAYVRCSLVNEGCVVHGNVEQSILFPGVHIGANSSVFESVLMPNVKVGENVVLRRTIIMEGACIPSGTHLAPSDPDDILVIDKDTEFSPSIAANQ.

Alpha-D-glucose 1-phosphate-binding positions include Y99, G164, 179-180, and S190; that span reads EK.

It belongs to the bacterial/plant glucose-1-phosphate adenylyltransferase family. As to quaternary structure, homotetramer.

It carries out the reaction alpha-D-glucose 1-phosphate + ATP + H(+) = ADP-alpha-D-glucose + diphosphate. The protein operates within glycan biosynthesis; glycogen biosynthesis. Its function is as follows. Involved in the biosynthesis of ADP-glucose, a building block required for the elongation reactions to produce glycogen. Catalyzes the reaction between ATP and alpha-D-glucose 1-phosphate (G1P) to produce pyrophosphate and ADP-Glc. The sequence is that of Glucose-1-phosphate adenylyltransferase from Halalkalibacterium halodurans (strain ATCC BAA-125 / DSM 18197 / FERM 7344 / JCM 9153 / C-125) (Bacillus halodurans).